The sequence spans 357 residues: Holliday junction branch migration complex subunit RuvB (357 aa).

Residues 4–195 (TDKLAAKAVS…FGIVARLEFY (192 aa)) are large ATPase domain (RuvB-L). ATP contacts are provided by residues Leu34, Arg35, Gly76, Lys79, Thr80, Thr81, 142-144 (EDY), Arg185, Tyr195, and Arg232. Thr80 lines the Mg(2+) pocket. Positions 196–266 (TPAELAKIVT…VADAALAMLD (71 aa)) are small ATPAse domain (RuvB-S). A head domain (RuvB-H) region spans residues 269-357 (AVGFDLMDRK…PVRDLWDDNQ (89 aa)). DNA-binding residues include Arg305, Arg324, and Arg329.

It belongs to the RuvB family. In terms of assembly, homohexamer. Forms an RuvA(8)-RuvB(12)-Holliday junction (HJ) complex. HJ DNA is sandwiched between 2 RuvA tetramers; dsDNA enters through RuvA and exits via RuvB. An RuvB hexamer assembles on each DNA strand where it exits the tetramer. Each RuvB hexamer is contacted by two RuvA subunits (via domain III) on 2 adjacent RuvB subunits; this complex drives branch migration. In the full resolvosome a probable DNA-RuvA(4)-RuvB(12)-RuvC(2) complex forms which resolves the HJ.

It localises to the cytoplasm. It catalyses the reaction ATP + H2O = ADP + phosphate + H(+). Functionally, the RuvA-RuvB-RuvC complex processes Holliday junction (HJ) DNA during genetic recombination and DNA repair, while the RuvA-RuvB complex plays an important role in the rescue of blocked DNA replication forks via replication fork reversal (RFR). RuvA specifically binds to HJ cruciform DNA, conferring on it an open structure. The RuvB hexamer acts as an ATP-dependent pump, pulling dsDNA into and through the RuvAB complex. RuvB forms 2 homohexamers on either side of HJ DNA bound by 1 or 2 RuvA tetramers; 4 subunits per hexamer contact DNA at a time. Coordinated motions by a converter formed by DNA-disengaged RuvB subunits stimulates ATP hydrolysis and nucleotide exchange. Immobilization of the converter enables RuvB to convert the ATP-contained energy into a lever motion, pulling 2 nucleotides of DNA out of the RuvA tetramer per ATP hydrolyzed, thus driving DNA branch migration. The RuvB motors rotate together with the DNA substrate, which together with the progressing nucleotide cycle form the mechanistic basis for DNA recombination by continuous HJ branch migration. Branch migration allows RuvC to scan DNA until it finds its consensus sequence, where it cleaves and resolves cruciform DNA. This is Holliday junction branch migration complex subunit RuvB from Ralstonia pickettii (strain 12J).